Here is a 100-residue protein sequence, read N- to C-terminus: Small ubiquitin-related modifier 1 (100 aa).

The Ubiquitin-like domain maps to 19-96; the sequence is EYIKLKVIGQ…IEVYQEQTGG (78 aa). G96 participates in a covalent cross-link: Glycyl lysine isopeptide (Gly-Lys) (interchain with K-? in acceptor proteins). The propeptide occupies 97–100; it reads CRND.

The protein belongs to the ubiquitin family. SUMO subfamily. Interacts with sae2, ube2i, ranbp2, pias1 and pias2. Covalently attached to a number of proteins. Post-translationally, cleavage of precursor form by a sentrin-specific protease is necessary for function.

It is found in the nucleus membrane. It localises to the nucleus speckle. The protein localises to the cytoplasm. The protein resides in the nucleus. Its subcellular location is the PML body. It is found in the cell membrane. Ubiquitin-like protein that can be covalently attached to proteins as a monomer or a lysine-linked polymer. Covalent attachment via an isopeptide bond to its substrates requires prior activation by the E1 complex sae1-sae2 and linkage to the E2 enzyme ube2i. This post-translational modification on lysine residues of proteins plays a crucial role in a number of cellular processes such as nuclear transport, DNA replication and repair, mitosis and signal transduction. Polymeric sumo1 chains are also susceptible to polyubiquitination which functions as a signal for proteasomal degradation of modified proteins. This chain is Small ubiquitin-related modifier 1 (sumo1), found in Danio rerio (Zebrafish).